Here is a 492-residue protein sequence, read N- to C-terminus: N-succinylglutamate 5-semialdehyde dehydrogenase (492 aa).

Residue 220–225 (GSASTG) participates in NAD(+) binding. Catalysis depends on residues Glu243 and Cys277.

This sequence belongs to the aldehyde dehydrogenase family. AstD subfamily.

It carries out the reaction N-succinyl-L-glutamate 5-semialdehyde + NAD(+) + H2O = N-succinyl-L-glutamate + NADH + 2 H(+). The protein operates within amino-acid degradation; L-arginine degradation via AST pathway; L-glutamate and succinate from L-arginine: step 4/5. Its function is as follows. Catalyzes the NAD-dependent reduction of succinylglutamate semialdehyde into succinylglutamate. The chain is N-succinylglutamate 5-semialdehyde dehydrogenase from Salmonella dublin (strain CT_02021853).